We begin with the raw amino-acid sequence, 263 residues long: Acetylglutamate kinase (263 aa).

Residues 48–49 (GG), R70, and N162 contribute to the substrate site.

Belongs to the acetylglutamate kinase family. ArgB subfamily.

The protein localises to the cytoplasm. It catalyses the reaction N-acetyl-L-glutamate + ATP = N-acetyl-L-glutamyl 5-phosphate + ADP. The protein operates within amino-acid biosynthesis; L-arginine biosynthesis; N(2)-acetyl-L-ornithine from L-glutamate: step 2/4. Functionally, catalyzes the ATP-dependent phosphorylation of N-acetyl-L-glutamate. The chain is Acetylglutamate kinase from Vibrio campbellii (strain ATCC BAA-1116).